A 388-amino-acid polypeptide reads, in one-letter code: MNLHEYQAKQLFARYGLPAPTGYACTTPREAEEAASKIGAGPWVVKCQVHAGGRGKAGGVKVVSNKEDIRAFAENWLGKKLVTYQTDAQGQPVHQILVEAATDIDKELYLGAVVDRGTRRVVFMASTEGGVEIEKVAEETPELIHKAAIDPLVGPQPYQGRELAFKLGLSGKQVAQFTKIFMGLATLFLERDLALVEINPLVITKQGDLVCLDGKLGADGNALFRQPELREMRDPSQEDSREAHAAQWELNYVALDGNIGCMVNGAGLAMGTMDIVKLHGGSPANFLDVGGGATKERVTEAFKIILSDDKVKAVFVNIFGGIVRCDLIADGIIGAVAEVGVNVPVVVRLEGNNAELGAKKLADSGLNIIAATSLTGAAQQVVAAVEGK.

Positions 9–244 constitute an ATP-grasp domain; it reads KQLFARYGLP…PSQEDSREAH (236 aa). Residues Lys46, 53-55, Glu99, Thr102, and Glu107 each bind ATP; that span reads GRG. Residues Asn199 and Asp213 each contribute to the Mg(2+) site. Residues Asn264 and 321 to 323 contribute to the substrate site; that span reads GIV.

It belongs to the succinate/malate CoA ligase beta subunit family. In terms of assembly, heterotetramer of two alpha and two beta subunits. Mg(2+) is required as a cofactor.

It catalyses the reaction succinate + ATP + CoA = succinyl-CoA + ADP + phosphate. It carries out the reaction GTP + succinate + CoA = succinyl-CoA + GDP + phosphate. The protein operates within carbohydrate metabolism; tricarboxylic acid cycle; succinate from succinyl-CoA (ligase route): step 1/1. Its function is as follows. Succinyl-CoA synthetase functions in the citric acid cycle (TCA), coupling the hydrolysis of succinyl-CoA to the synthesis of either ATP or GTP and thus represents the only step of substrate-level phosphorylation in the TCA. The beta subunit provides nucleotide specificity of the enzyme and binds the substrate succinate, while the binding sites for coenzyme A and phosphate are found in the alpha subunit. This Pectobacterium carotovorum subsp. carotovorum (strain PC1) protein is Succinate--CoA ligase [ADP-forming] subunit beta.